Here is a 183-residue protein sequence, read N- to C-terminus: A-type ATP synthase subunit E (183 aa).

This sequence belongs to the V-ATPase E subunit family. As to quaternary structure, has multiple subunits with at least A(3), B(3), C, D, E, F, H, I and proteolipid K(x).

The protein localises to the cell membrane. In terms of biological role, component of the A-type ATP synthase that produces ATP from ADP in the presence of a proton gradient across the membrane. This chain is A-type ATP synthase subunit E, found in Methanococcoides burtonii (strain DSM 6242 / NBRC 107633 / OCM 468 / ACE-M).